A 624-amino-acid chain; its full sequence is Chaperone protein DnaK (624 aa).

Phosphothreonine; by autocatalysis is present on Thr174. 2 disordered regions span residues Ile470 to Val504 and Asn577 to Lys624. Positions Glu481–Val504 are enriched in basic and acidic residues. Positions Asn577–Asp605 are enriched in low complexity. Residues Gly615 to Lys624 show a composition bias toward basic and acidic residues.

The protein belongs to the heat shock protein 70 family.

In terms of biological role, acts as a chaperone. The sequence is that of Chaperone protein DnaK from Lactobacillus johnsonii (strain CNCM I-12250 / La1 / NCC 533).